Here is a 385-residue protein sequence, read N- to C-terminus: Bifunctional chorismate mutase/prephenate dehydratase (385 aa).

The region spanning 1 to 92 (MPSKNDLLSF…ESVLTQKKLL (92 aa)) is the Chorismate mutase domain. Residues R11, R28, K39, D48, E52, S84, and Q88 each coordinate substrate. One can recognise a Prephenate dehydratase domain in the interval 105 to 285 (SFSFLGPKGS…NITRFILLSR (181 aa)). The segment at 286–385 (KPVSISSKIP…PSENITPIIP (100 aa)) is regulatory. Positions 299–376 (TLIFNTGQES…KFIKILGCYP (78 aa)) constitute an ACT domain.

It localises to the cytoplasm. It carries out the reaction chorismate = prephenate. The catalysed reaction is prephenate + H(+) = 3-phenylpyruvate + CO2 + H2O. The protein operates within amino-acid biosynthesis; L-phenylalanine biosynthesis; phenylpyruvate from prephenate: step 1/1. It participates in metabolic intermediate biosynthesis; prephenate biosynthesis; prephenate from chorismate: step 1/1. Functionally, catalyzes the Claisen rearrangement of chorismate to prephenate and the decarboxylation/dehydration of prephenate to phenylpyruvate. In Buchnera aphidicola subsp. Schizaphis graminum (strain Sg), this protein is Bifunctional chorismate mutase/prephenate dehydratase (pheA).